The chain runs to 316 residues: 4-diphosphocytidyl-2-C-methyl-D-erythritol kinase (316 aa).

Lys-32 is an active-site residue. ATP is bound at residue 126–136 (PVGAGLGGGSA). The active site involves Asp-168.

The protein belongs to the GHMP kinase family. IspE subfamily.

It carries out the reaction 4-CDP-2-C-methyl-D-erythritol + ATP = 4-CDP-2-C-methyl-D-erythritol 2-phosphate + ADP + H(+). It participates in isoprenoid biosynthesis; isopentenyl diphosphate biosynthesis via DXP pathway; isopentenyl diphosphate from 1-deoxy-D-xylulose 5-phosphate: step 3/6. Its function is as follows. Catalyzes the phosphorylation of the position 2 hydroxy group of 4-diphosphocytidyl-2C-methyl-D-erythritol. This chain is 4-diphosphocytidyl-2-C-methyl-D-erythritol kinase, found in Bifidobacterium longum (strain NCC 2705).